The sequence spans 156 residues: ATP synthase subunit b (156 aa).

Residues 7–26 traverse the membrane as a helical segment; the sequence is LIGQLIAFALFVAFCMKYVW.

The protein belongs to the ATPase B chain family. As to quaternary structure, F-type ATPases have 2 components, F(1) - the catalytic core - and F(0) - the membrane proton channel. F(1) has five subunits: alpha(3), beta(3), gamma(1), delta(1), epsilon(1). F(0) has three main subunits: a(1), b(2) and c(10-14). The alpha and beta chains form an alternating ring which encloses part of the gamma chain. F(1) is attached to F(0) by a central stalk formed by the gamma and epsilon chains, while a peripheral stalk is formed by the delta and b chains.

The protein localises to the cell inner membrane. In terms of biological role, f(1)F(0) ATP synthase produces ATP from ADP in the presence of a proton or sodium gradient. F-type ATPases consist of two structural domains, F(1) containing the extramembraneous catalytic core and F(0) containing the membrane proton channel, linked together by a central stalk and a peripheral stalk. During catalysis, ATP synthesis in the catalytic domain of F(1) is coupled via a rotary mechanism of the central stalk subunits to proton translocation. Component of the F(0) channel, it forms part of the peripheral stalk, linking F(1) to F(0). This is ATP synthase subunit b from Haemophilus ducreyi (strain 35000HP / ATCC 700724).